Consider the following 235-residue polypeptide: Small ribosomal subunit protein uS3 (235 aa).

A KH type-2 domain is found at 39-107 (IREFIKEECK…ELHLNIVEVR (69 aa)). The interval 213 to 235 (QARDRKAQELQDGPAPRGAGGRR) is disordered.

It belongs to the universal ribosomal protein uS3 family. In terms of assembly, part of the 30S ribosomal subunit. Forms a tight complex with proteins S10 and S14.

Its function is as follows. Binds the lower part of the 30S subunit head. Binds mRNA in the 70S ribosome, positioning it for translation. The polypeptide is Small ribosomal subunit protein uS3 (Ruegeria pomeroyi (strain ATCC 700808 / DSM 15171 / DSS-3) (Silicibacter pomeroyi)).